We begin with the raw amino-acid sequence, 421 residues long: MLTNGPRGTKDVLPSEAYKWHYVEGVFKEVAKRFGFEEIRTPVFEHTELFERGVGDTTDVVEKEMYTFLDRGGRSITLKPEGTAPAARSFIEHKLYADTQPTKMFYITPVFRYERPQAGRFREHHQFGVEAFGASSASVDAEVINLAMSVYEAFGVKKLELRINSVGCPKCRAEYNKVLRAFLSSRLDQLCGTCQNRFERNPIRIIDCKSDSCQAQLTDVPLMMDHLCGECQDHFEELKKYLEASGLHYVIDPRIVRGLDYYTKTAFEIITEEAGKKGTVCGGGRYDKLVEDCGGPSTPGVGFGMGIERAILALEDQGIEIPKPEGLDVFIVTMGEKASYEGFKLLTALRRAGFSGDKDHLDRSVKAQFKYANKVNASYTIIIGENELEKGIAKLKNMANSEEIEIELKDITKLKEILSGR.

The protein belongs to the class-II aminoacyl-tRNA synthetase family. As to quaternary structure, homodimer.

Its subcellular location is the cytoplasm. It carries out the reaction tRNA(His) + L-histidine + ATP = L-histidyl-tRNA(His) + AMP + diphosphate + H(+). The protein is Histidine--tRNA ligase of Alkaliphilus oremlandii (strain OhILAs) (Clostridium oremlandii (strain OhILAs)).